Here is a 558-residue protein sequence, read N- to C-terminus: Coiled-coil domain-containing protein 63 (558 aa).

The segment at 1–26 (MPTKKHRRKDPESPQEPSEKTKEQLV) is disordered. The span at 9–26 (KDPESPQEPSEKTKEQLV) shows a compositional bias: basic and acidic residues. 2 coiled-coil regions span residues 48 to 289 (NFRS…KAKK) and 339 to 416 (VTEL…VENL). Residues 531-558 (HYATRESRNRDSMPEKGDELKSKKKVTV) form a disordered region. Residues 533–551 (ATRESRNRDSMPEKGDELK) show a composition bias toward basic and acidic residues.

Functionally, plays a role in spermiogenesis. Involved in the elongation of flagella and the formation of sperm heads. This chain is Coiled-coil domain-containing protein 63, found in Bos taurus (Bovine).